Here is a 198-residue protein sequence, read N- to C-terminus: Na(+)-translocating NADH-quinone reductase subunit E (198 aa).

6 helical membrane-spanning segments follow: residues 11-31 (SIFIENMALSFFLGMCTFLAV), 39-59 (FGLGIAVTVVLTISVPVNNLV), 77-97 (FLNFITFIGVIAALVQILEMI), 110-130 (GIFLPLITVNCAIFGGVSFMV), 140-160 (VVYGFGSGVGWMLAIVALAGI), and 176-196 (LGITFITAGLMALGFMSFSGV).

Belongs to the NqrDE/RnfAE family. As to quaternary structure, composed of six subunits; NqrA, NqrB, NqrC, NqrD, NqrE and NqrF.

It is found in the cell inner membrane. It catalyses the reaction a ubiquinone + n Na(+)(in) + NADH + H(+) = a ubiquinol + n Na(+)(out) + NAD(+). In terms of biological role, NQR complex catalyzes the reduction of ubiquinone-1 to ubiquinol by two successive reactions, coupled with the transport of Na(+) ions from the cytoplasm to the periplasm. NqrA to NqrE are probably involved in the second step, the conversion of ubisemiquinone to ubiquinol. This is Na(+)-translocating NADH-quinone reductase subunit E from Vibrio anguillarum (Listonella anguillarum).